We begin with the raw amino-acid sequence, 119 residues long: Large ribosomal subunit protein uL22 (119 aa).

Belongs to the universal ribosomal protein uL22 family. Part of the 50S ribosomal subunit.

In terms of biological role, this protein binds specifically to 23S rRNA; its binding is stimulated by other ribosomal proteins, e.g. L4, L17, and L20. It is important during the early stages of 50S assembly. It makes multiple contacts with different domains of the 23S rRNA in the assembled 50S subunit and ribosome. Functionally, the globular domain of the protein is located near the polypeptide exit tunnel on the outside of the subunit, while an extended beta-hairpin is found that lines the wall of the exit tunnel in the center of the 70S ribosome. The sequence is that of Large ribosomal subunit protein uL22 from Rickettsia felis (strain ATCC VR-1525 / URRWXCal2) (Rickettsia azadi).